Reading from the N-terminus, the 491-residue chain is Putative mannan endo-1,4-beta-mannosidase 5 (491 aa).

The N-terminal stretch at 1 to 31 (METSYREEEARRKASLLHCIFFFLLGALAMA) is a signal peptide. Substrate-binding residues include Trp-134 and Asn-248. The active-site Proton donor is Glu-249. Tyr-330 contacts substrate. Glu-372 acts as the Nucleophile in catalysis. A glycan (N-linked (GlcNAc...) asparagine) is linked at Asn-385. Trp-416 is a substrate binding site. Asn-471 is a glycosylation site (N-linked (GlcNAc...) asparagine).

It belongs to the glycosyl hydrolase 5 (cellulase A) family. As to expression, expression not detected.

The protein resides in the secreted. The catalysed reaction is Random hydrolysis of (1-&gt;4)-beta-D-mannosidic linkages in mannans, galactomannans and glucomannans.. The polypeptide is Putative mannan endo-1,4-beta-mannosidase 5 (MAN5) (Oryza sativa subsp. japonica (Rice)).